The chain runs to 360 residues: Phenylalanine--tRNA ligase alpha subunit (360 aa).

Glu-260 is a Mg(2+) binding site.

This sequence belongs to the class-II aminoacyl-tRNA synthetase family. Phe-tRNA synthetase alpha subunit type 1 subfamily. As to quaternary structure, tetramer of two alpha and two beta subunits. Mg(2+) serves as cofactor.

The protein resides in the cytoplasm. It carries out the reaction tRNA(Phe) + L-phenylalanine + ATP = L-phenylalanyl-tRNA(Phe) + AMP + diphosphate + H(+). This chain is Phenylalanine--tRNA ligase alpha subunit, found in Rhizobium etli (strain ATCC 51251 / DSM 11541 / JCM 21823 / NBRC 15573 / CFN 42).